The sequence spans 443 residues: KH domain-containing, RNA-binding, signal transduction-associated protein 1 (443 aa).

The segment at Met-1 to Ala-95 is disordered. Ser-18 and Ser-20 each carry phosphoserine. Residue Lys-21 is modified to N6-acetyllysine. Ser-29 carries the phosphoserine modification. A Phosphothreonine modification is found at Thr-33. An asymmetric dimethylarginine; by PRMT1 mark is found at Arg-45 and Arg-52. Phosphoserine is present on Ser-58. The span at Thr-61 to Pro-72 shows a compositional bias: pro residues. A compositionally biased stretch (low complexity) spans Ser-81 to Ala-95. Residue Thr-84 is modified to Phosphothreonine; by MAPK1. Residues Lys-96 and Lys-102 each participate in a glycyl lysine isopeptide (Lys-Gly) (interchain with G-Cter in SUMO2) cross-link. The segment at Glu-100–Met-260 is involved in homodimerization. Ser-113 is modified (phosphoserine). A Glycyl lysine isopeptide (Lys-Gly) (interchain with G-Cter in SUMO2) cross-link involves residue Lys-139. Ser-150 carries the post-translational modification Phosphoserine. The region spanning Asn-171 to Val-197 is the KH domain. Lys-175 carries the post-translational modification N6-acetyllysine; alternate. Lys-175 participates in a covalent cross-link: Glycyl lysine isopeptide (Lys-Gly) (interchain with G-Cter in SUMO2); alternate. At Thr-183 the chain carries Phosphothreonine. The tract at residues Pro-280 to Thr-317 is disordered. Arg-282, Arg-284, and Arg-291 each carry omega-N-methylarginine. The segment covering Gly-283–Ala-293 has biased composition (low complexity). At Arg-304 the chain carries Asymmetric dimethylarginine; by PRMT1. Residues Gly-307 to Gly-316 show a composition bias toward low complexity. Residues Arg-310 and Arg-315 each carry the omega-N-methylarginine; by PRMT1 modification. Position 320 is a dimethylated arginine; alternate (Arg-320). Arg-320 is modified (omega-N-methylarginine; by PRMT1; alternate). Arg-325 is modified (omega-N-methylarginine; by PRMT1). The segment at Gly-326–Pro-345 is disordered. Dimethylated arginine; alternate occurs at positions 331 and 340. Omega-N-methylarginine; by PRMT1; alternate is present on residues Arg-331 and Arg-340. At Arg-331 the chain carries Asymmetric dimethylarginine; alternate. An interaction with HNRNPA1 region spans residues Gly-351 to Tyr-443. At Tyr-387 the chain carries Phosphotyrosine. Ser-390 is subject to Phosphoserine. The segment at Gly-400 to Arg-420 is interaction with ZBTB7A. Residues Tyr-411–Tyr-443 form a disordered region. A Glycyl lysine isopeptide (Lys-Gly) (interchain with G-Cter in SUMO2) cross-link involves residue Lys-432. The segment covering Ala-434 to Tyr-443 has biased composition (basic and acidic residues). Residues Tyr-435, Tyr-440, and Tyr-443 each carry the phosphotyrosine; by PTK6 modification.

Belongs to the KHDRBS family. In terms of assembly, self-associates to form homooligomers when bound to RNA, oligomerization appears to be limited when binding to proteins. Interacts with KHDRBS3/SLIM-2. Forms a trimeric complex in the nucleus consisting of BANP, HDAC6 and KHDRBS1/SAM68; HDAC6 keeps KHDRBS1 in a deacetylated state which inhibits the inclusion of CD44 alternate exons. The complex is disrupted by MAPK1/MAPK3-mediated phosphorylation of BANP which results in BANP export to the cytoplasm. This facilitates acetylation of KHDRBS1 and CD44 variant exon inclusion. Interacts with KHDRBS2/SLIM-1; heterooligomer formation of KHDRBS family proteins may modulate RNA substrate specificity. Interacts with PIK3R1, PLCG1. Interacts with RASA1, GRB2, SRC, CBP, PRMT1, APC, HNRNPA1. Interacts with PTK6 (via SH3 and SH2 domains). Forms a complex with ILF2, ILF3, YLPM1, RBMX, NCOA5 and PPP1CA. Binds WBP4/FBP21 (via WW domains), FNBP4/FBP30 (via WW domains). Interacts (via Arg/Gly-rich-flanked Pro-rich regions) with FYN (via the SH3 domain). Interacts with the non-receptor tyrosine kinase SRMS; the interaction leads to phosphorylation of KHDRBS1. Interacts with ZBTB7A; negatively regulates KHDRBS1 splicing activity toward BCL2L1. Post-translationally, tyrosine phosphorylated by several non-receptor tyrosine kinases including LCK, FYN and JAK3. Also tyrosine phosphorylated by the non-receptor tyrosine kinase SRMS in an EGF-dependent manner. Phosphorylation by PTK6 negatively regulates its RNA binding ability. Phosphorylation by PTK6 at Tyr-440 dictates the nuclear localization of KHDRBS1. In terms of processing, acetylated. Positively correlates with ability to bind RNA. Deacetylated by HDAC6; this regulates alternative splicing by inhibiting the inclusion of CD44 alternate exons. Arginine methylation is required for nuclear localization, Inhibits interaction with Src-like SH3 domains, but not interaction with WW domains of WBP4/FBP21 and FNBP4/FBP30.

It localises to the nucleus. The protein localises to the cytoplasm. The protein resides in the membrane. Functionally, recruited and tyrosine phosphorylated by several receptor systems, for example the T-cell, leptin and insulin receptors. Once phosphorylated, functions as an adapter protein in signal transduction cascades by binding to SH2 and SH3 domain-containing proteins. Role in G2-M progression in the cell cycle. Represses CBP-dependent transcriptional activation apparently by competing with other nuclear factors for binding to CBP. Also acts as a putative regulator of mRNA stability and/or translation rates and mediates mRNA nuclear export. Positively regulates the association of constitutive transport element (CTE)-containing mRNA with large polyribosomes and translation initiation. May not be involved in the nucleocytoplasmic export of unspliced (CTE)-containing RNA species. RNA-binding protein that plays a role in the regulation of alternative splicing and influences mRNA splice site selection and exon inclusion. Binds to RNA containing 5'-[AU]UAA-3' as a bipartite motif spaced by more than 15 nucleotides. Binds poly(A). Can regulate CD44 alternative splicing in a Ras pathway-dependent manner. In cooperation with HNRNPA1 modulates alternative splicing of BCL2L1 by promoting splicing toward isoform Bcl-X(S), and of SMN1. Can regulate alternative splicing of NRXN1 and NRXN3 in the laminin G-like domain 6 containing the evolutionary conserved neurexin alternative spliced segment 4 (AS4) involved in neurexin selective targeting to postsynaptic partners. In a neuronal activity-dependent manner cooperates synergistically with KHDRBS2/SLIM-1 in regulation of NRXN1 exon skipping at AS4. The cooperation with KHDRBS2/SLIM-1 is antagonistic for regulation of NXRN3 alternative splicing at AS4. The sequence is that of KH domain-containing, RNA-binding, signal transduction-associated protein 1 from Rattus norvegicus (Rat).